Here is a 365-residue protein sequence, read N- to C-terminus: S-adenosylmethionine:tRNA ribosyltransferase-isomerase (365 aa).

It belongs to the QueA family. Monomer.

It is found in the cytoplasm. The enzyme catalyses 7-aminomethyl-7-carbaguanosine(34) in tRNA + S-adenosyl-L-methionine = epoxyqueuosine(34) in tRNA + adenine + L-methionine + 2 H(+). It participates in tRNA modification; tRNA-queuosine biosynthesis. Functionally, transfers and isomerizes the ribose moiety from AdoMet to the 7-aminomethyl group of 7-deazaguanine (preQ1-tRNA) to give epoxyqueuosine (oQ-tRNA). This is S-adenosylmethionine:tRNA ribosyltransferase-isomerase from Rickettsia conorii (strain ATCC VR-613 / Malish 7).